Here is an 86-residue protein sequence, read N- to C-terminus: Small ribosomal subunit protein bS16 (86 aa).

It belongs to the bacterial ribosomal protein bS16 family.

This chain is Small ribosomal subunit protein bS16, found in Legionella pneumophila (strain Paris).